Consider the following 110-residue polypeptide: Non-specific lipid-transfer protein 4 (110 aa).

Positions Cys-1–Gly-17 are cleaved as a signal peptide. 4 cysteine pairs are disulfide-bonded: Cys-21-Cys-68, Cys-31-Cys-45, Cys-46-Cys-91, and Cys-66-Cys-105.

It belongs to the plant LTP family.

In terms of biological role, plant non-specific lipid-transfer proteins transfer phospholipids as well as galactolipids across membranes. May play a role in wax or cutin deposition in the cell walls of expanding epidermal cells and certain secretory tissues. This Lens culinaris (Lentil) protein is Non-specific lipid-transfer protein 4.